The chain runs to 209 residues: High frequency lysogenization protein HflD homolog (209 aa).

A coiled-coil region spans residues 79-121 (QGLNAELTRYTLSLMVLERKLNSAKGAMDTLGDRIAGLQRQLD).

This sequence belongs to the HflD family.

Its subcellular location is the cytoplasm. It localises to the cell inner membrane. This Enterobacter sp. (strain 638) protein is High frequency lysogenization protein HflD homolog.